The sequence spans 259 residues: uncharacterized protein (259 aa).

This sequence belongs to the chlamydial CPn_0128/CT_035/TC_0305 family.

This is an uncharacterized protein from Chlamydia muridarum (strain MoPn / Nigg).